We begin with the raw amino-acid sequence, 274 residues long: Single-stranded DNA-binding protein WHY1, chloroplastic (274 aa).

Residues 1–54 (MSNFSLSPSPTSGFSLNLQNPTKTSYLSFSSSINTIFAPLSSNTTKSFSGLTHK) constitute a chloroplast transit peptide. A required for ssDNA binding region spans residues 100-105 (KGKAAL). The short motif at 178-191 (KGRSDEGRVRKVLK) is the Nuclear localization signal element. A disordered region spans residues 253 to 274 (PEDASRSNNANPRSGAELEWNR).

It belongs to the Whirly family. As to quaternary structure, homotetramer.

The protein localises to the nucleus. The protein resides in the plastid. It localises to the chloroplast. Single-stranded DNA-binding protein that acts as a transcriptional activator of the pathogenesis-related gene PR-10a. Upon elicitation, binds a 30bp promoter sequence known as elicitor element response (ERE) and is required for PR-10a expression. This is Single-stranded DNA-binding protein WHY1, chloroplastic (WHY1) from Solanum tuberosum (Potato).